The sequence spans 122 residues: Ribosome-binding factor A (122 aa).

It belongs to the RbfA family. As to quaternary structure, monomer. Binds 30S ribosomal subunits, but not 50S ribosomal subunits or 70S ribosomes.

The protein localises to the cytoplasm. In terms of biological role, one of several proteins that assist in the late maturation steps of the functional core of the 30S ribosomal subunit. Associates with free 30S ribosomal subunits (but not with 30S subunits that are part of 70S ribosomes or polysomes). Required for efficient processing of 16S rRNA. May interact with the 5'-terminal helix region of 16S rRNA. This Caldanaerobacter subterraneus subsp. tengcongensis (strain DSM 15242 / JCM 11007 / NBRC 100824 / MB4) (Thermoanaerobacter tengcongensis) protein is Ribosome-binding factor A.